The sequence spans 353 residues: uncharacterized protein (353 aa).

Zn(2+) is bound by residues cysteine 40, histidine 70, cysteine 100, cysteine 103, cysteine 106, cysteine 114, and cysteine 158.

Belongs to the zinc-containing alcohol dehydrogenase family. Zn(2+) is required as a cofactor.

This is an uncharacterized protein from Escherichia coli (strain K12).